The sequence spans 123 residues: uncharacterized protein (123 aa).

Residues 1 to 24 (MGGGGPPARVQGTEGSQTGGGAVA) are disordered.

This is an uncharacterized protein from Halorubrum pleomorphic virus 1 (HRPV-1).